The sequence spans 35 residues: Conotoxin Ca15a (35 aa).

The residue at position 8 (Pro8) is a 4-hydroxyproline.

In terms of processing, contains 4 disulfide bonds. As to expression, expressed by the venom duct.

It localises to the secreted. The chain is Conotoxin Ca15a from Conus caracteristicus (Characteristic cone).